A 626-amino-acid polypeptide reads, in one-letter code: MSDAQDSRVGSMFGPYHLKRLLGRGGMGEVYEAEHTVKEWTVAVKLMTAEFSKDPVFRERMKREARIAGRLQEPHVVPIHDYGEVDGQMFLEMRLVEGTDLDSVLKRFGPLTPPRAVAIITQIASALDAAHADGVMHRDVKPQNILITRDDFAYLVDFGIASATTDEKLTQLGTAVGTWKYMAPERFSNDEVTYRADIYALACVLHECLTGAPPYRADSAGTLVSSHLMGPIPQPSAIRPGIPKAFDAVVARGMAKKPEDRYASAGDLALAAHEALSDPDQDHAADILRRSQESTLPAPPKPVPPPTMPATAMAPRQPPAPPVTPPGVQPAPKPSYTPPAQPGPAGQRPGPTGQPSWAPNSGPMPASGPTPTPQYYQGGGWGAPPSGGPSPWAQTPRKTNPWPLVAGAAAVVLVLVLGAIGIWIAIRPKPVQPPQPVAEERLSALLLNSSEVNAVMGSSSMQPGKPITSMDSSPVTVSLPDCQGALYTSQDPVYAGTGYTAINGLISSEPGDNYEHWVNQAVVAFPTADKARAFVQTSADKWKNCAGKTVTVTNKAKTYRWTFADVKGSPPTITVIDTQEGAEGWECQRAMSVANNVVVDVNACGYQITNQAGQIAAKIVDKVNKE.

The Cytoplasmic portion of the chain corresponds to 1 to 403 (MSDAQDSRVG…QTPRKTNPWP (403 aa)). Positions 16 to 276 (YHLKRLLGRG…DLALAAHEAL (261 aa)) constitute a Protein kinase domain. ATP contacts are provided by residues 22–30 (LGRGGMGEV) and Lys45. Asp139 acts as the Proton acceptor in catalysis. Position 170 is a phosphothreonine (Thr170). The interval 292–396 (QESTLPAPPK…GGPSPWAQTP (105 aa)) is disordered. Pro residues-rich tracts occupy residues 297-308 (PAPPKPVPPPTM) and 316-342 (RQPP…PAQP). Residues 343 to 355 (GPAGQRPGPTGQP) are compositionally biased toward low complexity. The chain crosses the membrane as a helical span at residues 404 to 424 (LVAGAAAVVLVLVLGAIGIWI). Residues 425-626 (AIRPKPVQPP…AKIVDKVNKE (202 aa)) are Extracellular-facing. 2 disulfide bridges follow: Cys482-Cys545 and Cys587-Cys604.

This sequence belongs to the protein kinase superfamily. Ser/Thr protein kinase family. Requires a divalent metal cation as cofactor. Post-translationally, autophosphorylated on threonine and serine residues. Dephosphorylated by PstP.

The protein resides in the cell membrane. It catalyses the reaction L-seryl-[protein] + ATP = O-phospho-L-seryl-[protein] + ADP + H(+). The catalysed reaction is L-threonyl-[protein] + ATP = O-phospho-L-threonyl-[protein] + ADP + H(+). Functionally, may regulate bacterial growth in response to external signals to facilitate adaptation to the host environment. This is Serine/threonine-protein kinase PknH (pknH) from Mycobacterium tuberculosis (strain CDC 1551 / Oshkosh).